A 440-amino-acid polypeptide reads, in one-letter code: Cysteine proteinase (440 aa).

Residues 1–60 (MYSSSVVSNPNERLVNNRVENDLESSDDTLSTQAKPVSRLLTRKLLLGVVVLFFLAGVSV) form the signal peptide. A propeptide spans 61–229 (VSYFLFSKYK…DEDVDLAKLT (169 aa)) (activation peptide). Positions 166–182 (VKGINRFSDLTEREFYK) are involved in processing to yield active enzymes. N-linked (GlcNAc...) asparagine glycosylation is present at Asn206. Cys250 and Cys291 are disulfide-bonded. Residues Cys253, His382, and Asn404 contribute to the active site.

Belongs to the peptidase C1 family.

This Theileria parva (East coast fever infection agent) protein is Cysteine proteinase.